We begin with the raw amino-acid sequence, 355 residues long: UDP-glucose 4-epimerase uge1 (355 aa).

8 to 39 serves as a coordination point for NAD(+); the sequence is TVLVTGGAGYIGSHTCVVLLEKGYDVVIVDNL.

Belongs to the NAD(P)-dependent epimerase/dehydratase family. Requires NAD(+) as cofactor.

The catalysed reaction is UDP-alpha-D-glucose = UDP-alpha-D-galactose. The protein operates within carbohydrate metabolism; galactose metabolism. Major UDP-glucose/-galactose 4-epimerase under glucose-rich conditions involved in protein galactosylation. In Schizosaccharomyces pombe (strain 972 / ATCC 24843) (Fission yeast), this protein is UDP-glucose 4-epimerase uge1 (uge1).